The following is a 1331-amino-acid chain: DNA replication ATP-dependent helicase/nuclease JHS1 (1331 aa).

A disordered region spans residues 1–98 (MPPRKKPKSS…DMDQQLTEAS (98 aa)). Residues 2–8 (PPRKKPK) carry the Nuclear localization signal motif. The segment covering 11–31 (ALKSNKQSSANHSSQPSTFGI) has biased composition (polar residues). The segment covering 40–52 (QNSQSTSNSHTST) has biased composition (low complexity). Residues 57–81 (DQQNVNGLASDTAVLTPQNPLGTSN) are compositionally biased toward polar residues. Residues 82 to 91 (EKPDESKDMD) are compositionally biased toward basic and acidic residues. Residues 362-811 (ECALYLWDEW…CKLRTGDRVI (450 aa)) are nuclease activity. 4 residues coordinate [4Fe-4S] cluster: cysteine 422, cysteine 666, cysteine 669, and cysteine 675. The interval 812–1331 (LRTEVSHLTV…LNLLPGDLKP (520 aa)) is helicase activity. In terms of domain architecture, UvrD-like helicase ATP-binding spans 924–1271 (NNDQRQAILK…VRSREKPRSS (348 aa)). 945 to 952 (GMPGTGKT) is an ATP binding site.

It belongs to the DNA2/NAM7 helicase family. The cofactor is [4Fe-4S] cluster. As to expression, strongly expressed in meristems, including both root and shoot apical meristems (RAM and SAM). Also present in the vasculature and in young floral tissues.

The protein localises to the nucleus. It localises to the chromosome. It catalyses the reaction ATP + H2O = ADP + phosphate + H(+). Functionally, essential protein required during embryogenesis. Key enzyme involved in DNA replication and damage repair, shoot apical meristem (SAM) maintenance, and development. Involved in Okazaki fragments processing. Possesses different enzymatic activities, such as single-stranded DNA (ssDNA)-dependent ATPase, 5'-3' helicase and endonuclease activities. While the ATPase and endonuclease activities are well-defined and play a key role in Okazaki fragments processing and DSB repair, the 5'-3' DNA helicase activity is atypical: it cannot load onto its tracking strand internally and has an absolute free 5'-end requirement. The sequence is that of DNA replication ATP-dependent helicase/nuclease JHS1 from Arabidopsis thaliana (Mouse-ear cress).